Reading from the N-terminus, the 301-residue chain is GTPase Era (301 aa).

The region spanning 7–175 is the Era-type G domain; sequence YCGFIAIVGR…ASIVRKHLPE (169 aa). The segment at 15–22 is G1; that stretch reads GRPNVGKS. 15 to 22 serves as a coordination point for GTP; it reads GRPNVGKS. A G2 region spans residues 41–45; sequence QTTRH. Residues 62–65 form a G3 region; that stretch reads DTPG. GTP is bound by residues 62–66 and 124–127; these read DTPGL and NKVD. Residues 124 to 127 form a G4 region; it reads NKVD. Residues 154–156 form a G5 region; the sequence is ISA. A KH type-2 domain is found at 206–283; it reads LGAELPYSVT…HLELWVKVKS (78 aa).

The protein belongs to the TRAFAC class TrmE-Era-EngA-EngB-Septin-like GTPase superfamily. Era GTPase family. In terms of assembly, monomer.

It localises to the cytoplasm. It is found in the cell inner membrane. In terms of biological role, an essential GTPase that binds both GDP and GTP, with rapid nucleotide exchange. Plays a role in 16S rRNA processing and 30S ribosomal subunit biogenesis and possibly also in cell cycle regulation and energy metabolism. This Salmonella arizonae (strain ATCC BAA-731 / CDC346-86 / RSK2980) protein is GTPase Era.